The chain runs to 358 residues: Peptide chain release factor 1 (358 aa).

An N5-methylglutamine modification is found at Gln-233.

It belongs to the prokaryotic/mitochondrial release factor family. In terms of processing, methylated by PrmC. Methylation increases the termination efficiency of RF1.

The protein resides in the cytoplasm. In terms of biological role, peptide chain release factor 1 directs the termination of translation in response to the peptide chain termination codons UAG and UAA. The polypeptide is Peptide chain release factor 1 (Listeria innocua serovar 6a (strain ATCC BAA-680 / CLIP 11262)).